Here is a 229-residue protein sequence, read N- to C-terminus: Large ribosomal subunit protein bL25 (229 aa).

Disordered regions lie at residues 1–21 (MDII…ASSR) and 182–229 (NAPE…KDKK). A compositionally biased stretch (low complexity) spans 195–222 (PAAGAPAAGAAAAPAAGAAAPAKGAAPA).

Belongs to the bacterial ribosomal protein bL25 family. CTC subfamily. Part of the 50S ribosomal subunit; part of the 5S rRNA/L5/L18/L25 subcomplex. Contacts the 5S rRNA. Binds to the 5S rRNA independently of L5 and L18.

Its function is as follows. This is one of the proteins that binds to the 5S RNA in the ribosome where it forms part of the central protuberance. The protein is Large ribosomal subunit protein bL25 of Sorangium cellulosum (strain So ce56) (Polyangium cellulosum (strain So ce56)).